The chain runs to 206 residues: Putative NAD(P)H nitroreductase MhqN (206 aa).

FMN is bound by residues arginine 11 to serine 13, glutamine 68 to lysine 70, isoleucine 157 to glycine 158, arginine 193, and arginine 196.

The protein belongs to the nitroreductase family. In terms of assembly, homodimer. FMN is required as a cofactor.

The protein localises to the cytoplasm. Putative nitroreductase that may contribute to the degradation of aromatic compounds. This chain is Putative NAD(P)H nitroreductase MhqN (mhqN), found in Bacillus subtilis (strain 168).